A 722-amino-acid chain; its full sequence is WD repeat-containing and planar cell polarity effector protein fritz homolog (722 aa).

WD repeat units follow at residues 305–343 (LRSKAISCCRNSTEDKLIVGCEDSSVILYEAHRGVTLLA) and 344–383 (QAELRPSLISCHPSGAILLVGSNQGELQIFDIALSPINIQ). The tract at residues 655–710 (IPNGPSSRWAIERRTEEEEEEEEEEEEELCTDSSGATTWNAEGELKEDQRKQDIGD) is disordered. Positions 671–684 (EEEEEEEEEEEELC) are enriched in acidic residues. A compositionally biased stretch (polar residues) spans 685–694 (TDSSGATTWN). Basic and acidic residues predominate over residues 697–708 (GELKEDQRKQDI).

This sequence belongs to the WD repeat fritz family. Component of the CPLANE (ciliogenesis and planar polarity effectors) complex, composed of INTU, FUZ and WDPCP. Interacts with CPLANE1.

Its subcellular location is the cell membrane. It localises to the cytoplasm. The protein localises to the cytoskeleton. The protein resides in the cilium axoneme. It is found in the cilium basal body. Functionally, probable effector of the planar cell polarity signaling pathway which regulates the septin cytoskeleton in both ciliogenesis and collective cell movements. Together with FUZ and WDPCP proposed to function as core component of the CPLANE (ciliogenesis and planar polarity effectors) complex involved in the recruitment of peripheral IFT-A proteins to basal bodies. Binds phosphatidylinositol 3-phosphate with highest affinity, followed by phosphatidylinositol 4-phosphate and phosphatidylinositol 5-phosphate. This is WD repeat-containing and planar cell polarity effector protein fritz homolog (Wdpcp) from Mus musculus (Mouse).